A 765-amino-acid polypeptide reads, in one-letter code: Protein O-mannosyl-transferase 2 (765 aa).

The segment at Met-1–Ser-31 is disordered. The helical transmembrane segment at Ala-35–Phe-55 threads the bilayer. Residues Asn-80, Asn-106, and Asn-119 are each glycosylated (N-linked (GlcNAc...) asparagine). A run of 5 helical transmembrane segments spans residues Tyr-128–Leu-148, Ile-175–Val-195, Gly-206–Val-226, Phe-228–Ile-248, and Ile-268–Val-288. Asn-290 and Asn-314 each carry an N-linked (GlcNAc...) asparagine glycan. MIR domains follow at residues Pro-318 to His-374, Val-384 to Val-440, and Asn-445 to Asn-501. A glycan (N-linked (GlcNAc...) asparagine) is linked at Asn-445. A run of 4 helical transmembrane segments spans residues Ile-566–Val-586, Leu-667–Phe-687, His-689–Leu-709, and Val-719–Ala-739. N-linked (GlcNAc...) asparagine glycosylation occurs at Asn-751.

Belongs to the glycosyltransferase 39 family. As to quaternary structure, interacts with Rt/POMT1. At the cellular blastoderm stage, expression accumulates in the ventrally located mesoderm primordium. At germ band extension, mesoderm expression is seen as stripes of strong expression. A very strong signal is also detected in the invaginating gut. As the germ band retracts, mesodermal expression decays and becomes restricted to somatic muscle precursors.

Its subcellular location is the endoplasmic reticulum membrane. It carries out the reaction a di-trans,poly-cis-dolichyl beta-D-mannosyl phosphate + L-seryl-[protein] = 3-O-(alpha-D-mannosyl)-L-seryl-[protein] + a di-trans,poly-cis-dolichyl phosphate + H(+). It catalyses the reaction a di-trans,poly-cis-dolichyl beta-D-mannosyl phosphate + L-threonyl-[protein] = 3-O-(alpha-D-mannosyl)-L-threonyl-[protein] + a di-trans,poly-cis-dolichyl phosphate + H(+). It functions in the pathway protein modification; protein glycosylation. Functionally, rt/POMT1 and tw/POMT2 function as a protein O-mannosyltransferase in association with each other to generate and maintain normal muscle development. This is Protein O-mannosyl-transferase 2 (tw) from Drosophila melanogaster (Fruit fly).